The chain runs to 132 residues: Fatty acid-binding protein, adipocyte (132 aa).

Cys-2 carries the N-acetylcysteine modification. Ser-13 bears the Phosphoserine mark. Phosphotyrosine; by Tyr-kinases is present on Tyr-20. The short motif at 22 to 32 is the Nuclear localization signal element; sequence KEVGVGFATRK. 127–129 contributes to the a fatty acid binding site; sequence RVY.

It belongs to the calycin superfamily. Fatty-acid binding protein (FABP) family. Monomer. Homodimer. Interacts with PPARG.

The protein resides in the cytoplasm. It localises to the nucleus. Its function is as follows. Lipid transport protein in adipocytes. Binds both long chain fatty acids and retinoic acid. Delivers long-chain fatty acids and retinoic acid to their cognate receptors in the nucleus. The protein is Fatty acid-binding protein, adipocyte (Fabp4) of Rattus norvegicus (Rat).